The following is a 316-amino-acid chain: Small kinetochore-associated protein (316 aa).

At S128 the chain carries Phosphoserine. Residues 159–316 (VRKGYKPLSK…LKEMEQLLEM (158 aa)) are interaction with SPAG5. Coiled coils occupy residues 166 to 216 (LSKQ…FRDN) and 248 to 316 (SMLL…LLEM).

As to quaternary structure, part of an astrin (SPAG5)-kinastrin (SKAP) complex containing KNSTRN, SPAG5, PLK1, DYNLL1 and SGO2. Interacts with SPAG5. Directly binds to microtubules, although at relatively low affinity. Interacts with CENPE; this interaction greatly favors microtubule-binding. Interacts with DSN1/MIS13; leading to localization to kinetochores. Interacts with MAPRE1/EB1; leading to localization to the microtubule plus ends. Interacts with PRPF19. Interacts with DYNLL1. Interacts with MAP4. Widely expressed, including in skin.

The protein resides in the nucleus. It is found in the chromosome. Its subcellular location is the centromere. It localises to the kinetochore. The protein localises to the cytoplasm. The protein resides in the cytoskeleton. It is found in the spindle pole. Its subcellular location is the microtubule organizing center. Its function is as follows. Essential component of the mitotic spindle required for faithful chromosome segregation and progression into anaphase. Promotes the metaphase-to-anaphase transition and is required for chromosome alignment, normal timing of sister chromatid segregation, and maintenance of spindle pole architecture. The astrin (SPAG5)-kinastrin (SKAP) complex promotes stable microtubule-kinetochore attachments. Required for kinetochore oscillations and dynamics of microtubule plus-ends during live cell mitosis, possibly by forming a link between spindle microtubule plus-ends and mitotic chromosomes to achieve faithful cell division. May be involved in UV-induced apoptosis via its interaction with PRPF19; however, these results need additional evidences. The protein is Small kinetochore-associated protein of Homo sapiens (Human).